The sequence spans 362 residues: Molybdenum import ATP-binding protein ModC (362 aa).

The region spanning 2–236 is the ABC transporter domain; it reads ASPIEVRLHM…LDLPLAMGGD (235 aa). 34-41 is an ATP binding site; the sequence is GPSGSGKT. The Mop domain occupies 297-362; sequence QSSILNRLPV…AQIKAVAVLA (66 aa).

It belongs to the ABC transporter superfamily. Molybdate importer (TC 3.A.1.8) family. In terms of assembly, the complex is composed of two ATP-binding proteins (ModC), two transmembrane proteins (ModB) and a solute-binding protein (ModA).

It localises to the cell inner membrane. It catalyses the reaction molybdate(out) + ATP + H2O = molybdate(in) + ADP + phosphate + H(+). In terms of biological role, part of the ABC transporter complex ModABC involved in molybdenum import. Responsible for energy coupling to the transport system. The protein is Molybdenum import ATP-binding protein ModC of Pseudomonas savastanoi pv. phaseolicola (strain 1448A / Race 6) (Pseudomonas syringae pv. phaseolicola (strain 1448A / Race 6)).